Reading from the N-terminus, the 955-residue chain is MAM domain-containing glycosylphosphatidylinositol anchor protein 1 (955 aa).

An N-terminal signal peptide occupies residues 1 to 18 (MEVTCLLLLALIPFHCRG). Ig-like domains are found at residues 24–123 (PAQA…KSIR) and 132–230 (PMLT…KAIT). Asparagine 42 and asparagine 90 each carry an N-linked (GlcNAc...) asparagine glycan. Disulfide bonds link cysteine 60/cysteine 108 and cysteine 157/cysteine 214. Residues asparagine 235, asparagine 247, asparagine 257, asparagine 307, and asparagine 331 are each glycosylated (N-linked (GlcNAc...) asparagine). One can recognise an Ig-like 3 domain in the interval 240-323 (PALKLSVNET…VGNPAKKTVN (84 aa)). Cysteine 262 and cysteine 308 form a disulfide bridge. 3 Ig-like domains span residues 338-432 (PDVI…VEVN), 440-532 (PTIS…AQVQ), and 539-631 (PEVE…FQVS). Cysteine 357 and cysteine 415 are disulfide-bonded. The N-linked (GlcNAc...) asparagine glycan is linked to asparagine 432. Disulfide bonds link cysteine 463–cysteine 514 and cysteine 560–cysteine 615. The Fibronectin type-III domain maps to 643-743 (TPNPTRSHKL…SRIIHYTEPI (101 aa)). Residues asparagine 655 and asparagine 747 are each glycosylated (N-linked (GlcNAc...) asparagine). The MAM domain maps to 751–918 (NTCHFEDEKI…VTLKKGECPR (168 aa)). Over residues 779–788 (LTQNPKRSPN) the composition is skewed to polar residues. A disordered region spans residues 779–798 (LTQNPKRSPNTGPPTDISGT). Asparagine 826 carries an N-linked (GlcNAc...) asparagine glycan. The GPI-anchor amidated serine moiety is linked to residue serine 932. Positions 933–955 (GAPCQSSPQLWGPMAIFLLALQR) are cleaved as a propeptide — removed in mature form.

Interacts heterophilically through its MAM domain with proteins in axon-rich regions and through its Ig-like domains with proteins in differentiating muscle. Interacts (through the Ig-like domains) with NLGN2. Has been found in brain, heart, skeletal muscle and kidney. Found to be overexpressed in tumor tissues.

It is found in the cell membrane. Its function is as follows. Required for radial migration of cortical neurons in the superficial layer of the neocortex. Plays a role in the formation or maintenance of inhibitory synapses. May function by inhibiting the activity of NLGN2. The protein is MAM domain-containing glycosylphosphatidylinositol anchor protein 1 (MDGA1) of Homo sapiens (Human).